The chain runs to 688 residues: Glycine--tRNA ligase beta subunit (688 aa).

This sequence belongs to the class-II aminoacyl-tRNA synthetase family. As to quaternary structure, tetramer of two alpha and two beta subunits.

Its subcellular location is the cytoplasm. The enzyme catalyses tRNA(Gly) + glycine + ATP = glycyl-tRNA(Gly) + AMP + diphosphate. The polypeptide is Glycine--tRNA ligase beta subunit (Vibrio parahaemolyticus serotype O3:K6 (strain RIMD 2210633)).